A 964-amino-acid polypeptide reads, in one-letter code: MLEEPECGAPGARGEAAAMDCKDRPAFPVKKLIQARLPFKRLNLVPKEKIDDGLDDTGGSRAGPVQTQLHNLETSLDHLENCHMGSDIDFRPKLVNGKGPLDNFLRSQVETSIGQAVVIIDLTEDSSNPPDNMVGHNKLNSAASSAQKNINGVPDKAGDDRGLPKARQKDELASPEEALSEVPCKTEAGGADSGGADRRGLTQRGSPQNCPKLTGDLSMWSEKDRDGWSEAGGILFKGKMPVVVLQDILALRPPARSPPATPPSQAVPSESETPESSPEEDLALSHSSLSSSSPTSSPEGQSVPTKLHTGPSPFPASTPVCRITKKLVRGSAEKNKMKLQRDKERLRRQLKLRAEKEEKEKLREEAKRAKEEARKKREEEKELKEKERREKREKDEKEKAEKQRLKEERRKERQEALEAKLEEKRKKEEEKRLREEEKRIKAEKAEITRFFQKPKTPQAPKTLAGSCGKFAPFEIKEHMVLAPRCRTAFDQDLCDQLDQLLQQQSSEFSFLQDLKSRRPLRSGPTVVSNRNTDLSNSDVVIVESSKVDGVPERRKFGRMKLLQFSENHRPAYWGTWNKKTTVIRPRDPWAQDRDLLDYEVDSDEEWEEEEPGESLSHSEGDDDDDVGEDEDEDDGFFVPHGYLSEDEGVTEECADPENHKVRQKLKAKEWDEFLAKGKRFRILQPVKIGCIWAADKDGGADLKVLQQFTACLLETVPPEEEQTPKASKREKRDQQILAQLLPLLHGNVNGSKVIIREFQECCRRGLLSRDAGSPEDSAASPPSPGPARPQTPTASEDVAVPSKARLKRIISENSVYEKRPDFRMCWYVHPQVLKSFAQEHLPVPCQWSYVTAVPSATREDSGSVPAPGPGQGMPVSLKRKSAGSMCITQFMKKRRHDGQVGTGDLDDFQADTEEEDDDEGDCVIMDISDVGDIQAPCGTTSGAGGSVGMDTSESFVSPSSLRLS.

Residues 1–49 (MLEEPECGAPGARGEAAAMDCKDRPAFPVKKLIQARLPFKRLNLVPKEK) are binds to PCNA. Residues 1-316 (MLEEPECGAP…LHTGPSPFPA (316 aa)) form a binds to CBX1 chromo shadow domain region. A phosphoserine mark is found at serine 126, serine 141, and serine 144. Residues 146 to 232 (AQKNINGVPD…KDRDGWSEAG (87 aa)) form a disordered region. Over residues 156-172 (KAGDDRGLPKARQKDEL) the composition is skewed to basic and acidic residues. Lysine 185 participates in a covalent cross-link: Glycyl lysine isopeptide (Lys-Gly) (interchain with G-Cter in SUMO1); alternate. Lysine 185 participates in a covalent cross-link: Glycyl lysine isopeptide (Lys-Gly) (interchain with G-Cter in SUMO2); alternate. The PxVxL motif motif lies at 236 to 249 (FKGKMPVVVLQDIL). 2 disordered regions span residues 253 to 437 (PPAR…REEE) and 601 to 641 (DSDE…VPHG). The span at 284-298 (LSHSSLSSSSPTSSP) shows a compositional bias: low complexity. Position 312 is a phosphoserine (serine 312). The stretch at 329-453 (RGSAEKNKMK…KAEITRFFQK (125 aa)) forms a coiled coil. The span at 331 to 437 (SAEKNKMKLQ…EEEKRLREEE (107 aa)) shows a compositional bias: basic and acidic residues. Acidic residues-rich tracts occupy residues 601 to 612 (DSDEEWEEEEPG) and 620 to 635 (GDDDDDVGEDEDEDDG). The necessary for homodimerization and competence for chromatin assembly stretch occupies residues 644-680 (SEDEGVTEECADPENHKVRQKLKAKEWDEFLAKGKRF). The binds to p60 stretch occupies residues 662-964 (RQKLKAKEWD…FVSPSSLRLS (303 aa)). At threonine 723 the chain carries Phosphothreonine. The tract at residues 769–799 (RDAGSPEDSAASPPSPGPARPQTPTASEDVA) is disordered. Residues 770 to 780 (DAGSPEDSAAS) show a composition bias toward low complexity. Serine 773, serine 783, serine 811, serine 876, and serine 881 each carry phosphoserine. The tract at residues 859-878 (EDSGSVPAPGPGQGMPVSLK) is disordered. Disordered regions lie at residues 897–920 (DGQVGTGDLDDFQADTEEEDDDEG) and 933–964 (IQAPCGTTSGAGGSVGMDTSESFVSPSSLRLS). Positions 904-920 (DLDDFQADTEEEDDDEG) are enriched in acidic residues. Residues 949–964 (MDTSESFVSPSSLRLS) show a composition bias toward polar residues. Serine 959 carries the post-translational modification Phosphoserine.

The protein belongs to the CHAF1A family. Homodimer. Part of the CAF-1 complex that contains RBBP4, CHAF1B and CHAF1A. CHAF1A binds directly to CHAF1B. Only minor amounts of RBBP4 are complexed with CHAF1A and CHAF1B in G1 phase. Interacts with PCNA; the interaction is direct. Interacts (via the PxVxL motif) with CBX5; the interaction is direct. Interacts with MBD1. Interacts with histones H3.1, H3.2 and H3.1t.

It is found in the nucleus. Acts as a component of the histone chaperone complex chromatin assembly factor 1 (CAF-1), which assembles histone octamers onto DNA during replication and repair. CAF-1 performs the first step of the nucleosome assembly process, bringing newly synthesized histones H3 and H4 to replicating DNA; histones H2A/H2B can bind to this chromatin precursor subsequent to DNA replication to complete the histone octamer. It may play a role in heterochromatin maintenance in proliferating cells by bringing newly synthesized cbx proteins to heterochromatic DNA replication foci. The polypeptide is Chromatin assembly factor 1 subunit A (CHAF1A) (Bos taurus (Bovine)).